The primary structure comprises 324 residues: MNILEYAPIACQSWQVTVVGAGNVGRTLAQRLVQQNVANVVLLDIVPGLPQGIALDLMAAQSVEEYDSKIIGTNEYEATAGSDVVVITAGLPRRPGMSRDDLLGKNANIVAQGAREALRYSPNAILIVVTNPLDVMTYLAWKVTGLPSQRVMGMAGVLDSARLKAFIAMKLGACPSDINTLVLGGHGDLMLPLPRYCTVSGVPITELIPPQTIEELVERTRNGGAEIAALLQTGTAYYAPASSAAVMVESILRNQSRILPAATYLDGAYGLKDIFLGVPCRLGCRGVEDILEVQLTPEEKAALHLSAEAVRLNIDVALAMVSDG.

Residues glycine 20–glycine 25 and aspartate 44 contribute to the NAD(+) site. Substrate contacts are provided by arginine 93 and arginine 99. Residues asparagine 106 and valine 129 to asparagine 131 contribute to the NAD(+) site. 2 residues coordinate substrate: asparagine 131 and arginine 162. The Proton acceptor role is filled by histidine 186.

Belongs to the LDH/MDH superfamily. MDH type 3 family.

It catalyses the reaction (S)-malate + NAD(+) = oxaloacetate + NADH + H(+). Functionally, catalyzes the reversible oxidation of malate to oxaloacetate. The chain is Malate dehydrogenase from Synechocystis sp. (strain ATCC 27184 / PCC 6803 / Kazusa).